The following is a 281-amino-acid chain: Large ribosomal subunit protein uL2 (281 aa).

The tract at residues 208–281 (AGRSRYAGQR…RGRKRGPHTR (74 aa)) is disordered. Over residues 254–281 (TVGKKTRSHKARSNKFIVRGRKRGPHTR) the composition is skewed to basic residues.

Belongs to the universal ribosomal protein uL2 family. In terms of assembly, part of the 50S ribosomal subunit. Forms a bridge to the 30S subunit in the 70S ribosome.

One of the primary rRNA binding proteins. Required for association of the 30S and 50S subunits to form the 70S ribosome, for tRNA binding and peptide bond formation. It has been suggested to have peptidyltransferase activity; this is somewhat controversial. Makes several contacts with the 16S rRNA in the 70S ribosome. This Limosilactobacillus fermentum (strain NBRC 3956 / LMG 18251) (Lactobacillus fermentum) protein is Large ribosomal subunit protein uL2.